The chain runs to 311 residues: Ribosomal protein L11 methyltransferase (311 aa).

Residues threonine 162, glycine 183, aspartate 205, and asparagine 248 each coordinate S-adenosyl-L-methionine.

This sequence belongs to the methyltransferase superfamily. PrmA family.

It is found in the cytoplasm. It carries out the reaction L-lysyl-[protein] + 3 S-adenosyl-L-methionine = N(6),N(6),N(6)-trimethyl-L-lysyl-[protein] + 3 S-adenosyl-L-homocysteine + 3 H(+). In terms of biological role, methylates ribosomal protein L11. This chain is Ribosomal protein L11 methyltransferase, found in Bacillus licheniformis (strain ATCC 14580 / DSM 13 / JCM 2505 / CCUG 7422 / NBRC 12200 / NCIMB 9375 / NCTC 10341 / NRRL NRS-1264 / Gibson 46).